Here is a 320-residue protein sequence, read N- to C-terminus: 3-hydroxybenzoate 6-hydroxylase 2 (320 aa).

Residues 1–25 (MRSTNTRSARSRPTKRSVNASATPT) are disordered. The span at 16–25 (RSVNASATPT) shows a compositional bias: polar residues.

Belongs to the 3-hydroxybenzoate 6-hydroxylase family. FAD is required as a cofactor.

It catalyses the reaction 3-hydroxybenzoate + NADH + O2 + H(+) = 2,5-dihydroxybenzoate + NAD(+) + H2O. In terms of biological role, catalyzes the conversion of 3-hydroxybenzoate to gentisate. The protein is 3-hydroxybenzoate 6-hydroxylase 2 (hbzD) of Aquipseudomonas alcaligenes (Pseudomonas alcaligenes).